The sequence spans 383 residues: Queuine tRNA-ribosyltransferase (383 aa).

Aspartate 90 (proton acceptor) is an active-site residue. Substrate is bound by residues 90–94 (DSGGF), aspartate 144, glutamine 193, and glycine 227. Residues 258–264 (GVGTPED) form an RNA binding region. Aspartate 277 functions as the Nucleophile in the catalytic mechanism. Positions 282–286 (TRNAR) are RNA binding; important for wobble base 34 recognition. Cysteine 315, cysteine 317, cysteine 320, and histidine 346 together coordinate Zn(2+).

This sequence belongs to the queuine tRNA-ribosyltransferase family. Homodimer. Within each dimer, one monomer is responsible for RNA recognition and catalysis, while the other monomer binds to the replacement base PreQ1. It depends on Zn(2+) as a cofactor.

It catalyses the reaction 7-aminomethyl-7-carbaguanine + guanosine(34) in tRNA = 7-aminomethyl-7-carbaguanosine(34) in tRNA + guanine. It functions in the pathway tRNA modification; tRNA-queuosine biosynthesis. Functionally, catalyzes the base-exchange of a guanine (G) residue with the queuine precursor 7-aminomethyl-7-deazaguanine (PreQ1) at position 34 (anticodon wobble position) in tRNAs with GU(N) anticodons (tRNA-Asp, -Asn, -His and -Tyr). Catalysis occurs through a double-displacement mechanism. The nucleophile active site attacks the C1' of nucleotide 34 to detach the guanine base from the RNA, forming a covalent enzyme-RNA intermediate. The proton acceptor active site deprotonates the incoming PreQ1, allowing a nucleophilic attack on the C1' of the ribose to form the product. After dissociation, two additional enzymatic reactions on the tRNA convert PreQ1 to queuine (Q), resulting in the hypermodified nucleoside queuosine (7-(((4,5-cis-dihydroxy-2-cyclopenten-1-yl)amino)methyl)-7-deazaguanosine). The sequence is that of Queuine tRNA-ribosyltransferase from Ralstonia nicotianae (strain ATCC BAA-1114 / GMI1000) (Ralstonia solanacearum).